The primary structure comprises 337 residues: Anthranilate phosphoribosyltransferase (337 aa).

5-phospho-alpha-D-ribose 1-diphosphate-binding positions include Gly82, Gly85–Asp86, Thr90, Asn92–Thr95, Lys110–Ser118, and Ser122. Gly82 serves as a coordination point for anthranilate. Mg(2+) is bound at residue Ser94. Position 168 (Arg168) interacts with anthranilate. Mg(2+)-binding residues include Asp226 and Glu227.

This sequence belongs to the anthranilate phosphoribosyltransferase family. Homodimer. Mg(2+) is required as a cofactor.

The catalysed reaction is N-(5-phospho-beta-D-ribosyl)anthranilate + diphosphate = 5-phospho-alpha-D-ribose 1-diphosphate + anthranilate. The protein operates within amino-acid biosynthesis; L-tryptophan biosynthesis; L-tryptophan from chorismate: step 2/5. In terms of biological role, catalyzes the transfer of the phosphoribosyl group of 5-phosphorylribose-1-pyrophosphate (PRPP) to anthranilate to yield N-(5'-phosphoribosyl)-anthranilate (PRA). This Francisella tularensis subsp. mediasiatica (strain FSC147) protein is Anthranilate phosphoribosyltransferase.